We begin with the raw amino-acid sequence, 707 residues long: Casein kinase 1-like protein HD16 (707 aa).

The disordered stretch occupies residues 19–67 (YDVQDADPAASPVSPAPRGRTGRRGGAAAGRGNKTVAEGGGRKALKPRG). Low complexity predominate over residues 24–37 (ADPAASPVSPAPRG). Residues 147–425 (YITDRKLGKG…KLISLFDGLI (279 aa)) form the Protein kinase domain. Residues 153–161 (LGKGGFGQV) and Lys184 each bind ATP. The active-site Proton acceptor is the Asp276.

This sequence belongs to the protein kinase superfamily. CK1 Ser/Thr protein kinase family. Casein kinase I subfamily. Monomer. Interacts with GHD7 (via C-terminus). Interacts with SLR1. Post-translationally, autophosphorylated. As to expression, expressed in roots, leaves and stems. Expressed in leaf vascular bundles, and proximal regions of the shoot and roots.

It is found in the cytoplasm. It localises to the nucleus. The enzyme catalyses L-seryl-[protein] + ATP = O-phospho-L-seryl-[protein] + ADP + H(+). The catalysed reaction is L-threonyl-[protein] + ATP = O-phospho-L-threonyl-[protein] + ADP + H(+). Casein kinases are operationally defined by their preferential utilization of acidic proteins such as caseins as substrates. It can phosphorylate a large number of proteins. Can phosphorylate casein on threonine residues in vitro. Involved in the regulation of flowering time through gibberellin (GA) signaling, and independently of photoperiod. Phosphorylates the DELLA protein SLR1, stabilizing SLR1 protein and sustaining SLR1 activity as repressor of GA signaling. Required for normal development of male floral organs and grains, through modulation of GA signaling. Targeted and repressed by the homeobox protein HAZ1 during GA signaling. Can phosphorylate phosvitin and SLR1 in vitro. Is not required for clock function in either the presence or the absence of light signals. Involved in a genetic control pathway for photoperiodic flowering under long day (LD) conditions that includes HD1, GHD7, HD5 and HD2. Phosphorylates and activates GHD7, a major floral repressor under LD conditions. Phosphorylation of GHD7 enhances its function in the repression of EHD1, HD3A and HD3B/RFT1, and obviously delaying flowering. The chain is Casein kinase 1-like protein HD16 from Oryza sativa subsp. japonica (Rice).